Consider the following 389-residue polypeptide: Capsule polysaccharide export protein KpsS (389 aa).

In Escherichia coli, this protein is Capsule polysaccharide export protein KpsS (kpsS).